A 56-amino-acid polypeptide reads, in one-letter code: Large ribosomal subunit protein bL32 (56 aa).

Over residues methionine 1–tryptophan 20 the composition is skewed to basic residues. The disordered stretch occupies residues methionine 1–lysine 21.

It belongs to the bacterial ribosomal protein bL32 family.

The protein is Large ribosomal subunit protein bL32 of Prochlorococcus marinus (strain MIT 9312).